The following is a 155-amino-acid chain: Nascent polypeptide-associated complex subunit beta (155 aa).

2 disordered regions span residues 1 to 39 (MDQA…DDKK) and 122 to 155 (QNMQ…SKVE). Basic residues predominate over residues 21 to 31 (TPRRKTKKVHK). Residues 34 to 99 (GTDDKKLQTS…GEEKELTELV (66 aa)) form the NAC-A/B domain. The span at 125 to 135 (QKKEGEAKKEG) shows a compositional bias: basic and acidic residues.

The protein belongs to the NAC-beta family. As to quaternary structure, part of the nascent polypeptide-associated complex (NAC), consisting of EGD2 and EGD1. NAC associates with ribosomes via EGD1.

Its subcellular location is the cytoplasm. It is found in the nucleus. Functionally, component of the nascent polypeptide-associated complex (NAC), a dynamic component of the ribosomal exit tunnel, protecting the emerging polypeptides from interaction with other cytoplasmic proteins to ensure appropriate nascent protein targeting. The NAC complex also promotes mitochondrial protein import by enhancing productive ribosome interactions with the outer mitochondrial membrane and blocks the inappropriate interaction of ribosomes translating non-secretory nascent polypeptides with translocation sites in the membrane of the endoplasmic reticulum. EGD1 may act as a transcription factor that exert a negative effect on the expression of several genes that are transcribed by RNA polymerase II. In Coccidioides immitis (strain RS) (Valley fever fungus), this protein is Nascent polypeptide-associated complex subunit beta (EGD1).